A 570-amino-acid chain; its full sequence is Small ribosomal subunit protein bS1 (570 aa).

6 consecutive S1 motif domains span residues 52 to 116, 134 to 199, 220 to 288, 305 to 375, 392 to 462, and 479 to 548; these read GAIL…LSRE, GSIV…VSRR, GERR…LGLK, GKRV…LGLK, GLRV…LGVK, and GSDI…LSIK.

It belongs to the bacterial ribosomal protein bS1 family.

Binds mRNA; thus facilitating recognition of the initiation point. It is needed to translate mRNA with a short Shine-Dalgarno (SD) purine-rich sequence. This Chlamydia muridarum (strain MoPn / Nigg) protein is Small ribosomal subunit protein bS1 (rpsA).